The primary structure comprises 196 residues: N-(5'-phosphoribosyl)anthranilate isomerase (196 aa).

Belongs to the TrpF family.

It catalyses the reaction N-(5-phospho-beta-D-ribosyl)anthranilate = 1-(2-carboxyphenylamino)-1-deoxy-D-ribulose 5-phosphate. Its pathway is amino-acid biosynthesis; L-tryptophan biosynthesis; L-tryptophan from chorismate: step 3/5. In Sulfurovum sp. (strain NBC37-1), this protein is N-(5'-phosphoribosyl)anthranilate isomerase.